The sequence spans 188 residues: Scytalone dehydratase (188 aa).

The substrate site is built by Tyr27, Tyr47, and Phe50. Residues His82 and His107 contribute to the active site. Asn128 provides a ligand contact to substrate.

Belongs to the scytalone dehydratase family. Homotrimer. Each subunit contains an active site, located in the central part of the hydrophobic core of the monomer, which functions independently.

The protein resides in the endosome. It catalyses the reaction scytalone = 1,3,8-trihydroxynaphthalene + H2O. The protein operates within pigment biosynthesis; melanin biosynthesis. With respect to regulation, carpropamid acts as an efficient inhibitor of scytalone dehydratase activity. Its function is as follows. Scytalone dehydratase; part of the gene cluster that mediates the biosynthesis of dihydroxynaphthalene (DHN)-melanin, a bluish-green pigment and a structural component of the conidial wall. Within the pathway, catalyzes the dehydration of scytalone as well as of vermelone. The sequence is that of Scytalone dehydratase from Colletotrichum orbiculare (strain 104-T / ATCC 96160 / CBS 514.97 / LARS 414 / MAFF 240422) (Cucumber anthracnose fungus).